Here is a 315-residue protein sequence, read N- to C-terminus: Homoserine kinase (315 aa).

Pro97–Thr107 serves as a coordination point for ATP.

Belongs to the GHMP kinase family. Homoserine kinase subfamily.

The protein localises to the cytoplasm. The enzyme catalyses L-homoserine + ATP = O-phospho-L-homoserine + ADP + H(+). It functions in the pathway amino-acid biosynthesis; L-threonine biosynthesis; L-threonine from L-aspartate: step 4/5. In terms of biological role, catalyzes the ATP-dependent phosphorylation of L-homoserine to L-homoserine phosphate. The chain is Homoserine kinase from Prochlorococcus marinus (strain NATL2A).